Reading from the N-terminus, the 902-residue chain is Inter-alpha-trypsin inhibitor heavy chain H1 (902 aa).

The first 28 residues, 1-28 (MDGTMGLQGLLCLCLASHLALQAMPTQG), serve as a signal peptide directing secretion. Positions 29–158 (SPTDSTKGNK…KATFQLTYEE (130 aa)) constitute a VIT domain. Cys-52 is a glycosylation site (S-linked (Hex...) cysteine). Asn-69 carries N-linked (GlcNAc...) asparagine glycosylation. A Phosphoserine modification is found at Ser-121. Asn-277 carries an N-linked (GlcNAc...) asparagine glycan. Residues 282 to 442 (NKNVVFVIDI…WNFLEVRALE (161 aa)) enclose the VWFA domain. 2 positions are modified to phosphothreonine: Thr-394 and Thr-399. Polar residues predominate over residues 637 to 651 (SASQPSPTHPSSSIQ). The disordered stretch occupies residues 637–656 (SASQPSPTHPSSSIQKLPDR). Ser-639 carries O-linked (GalNAc...) serine glycosylation. A glycan (O-linked (GalNAc...) threonine) is linked at Thr-644. Asp-663 carries the aspartate 1-(chondroitin 4-sulfate)-ester modification. The propeptide occupies 664-902 (PHFIIRVPQK…HTDYIVPDIF (239 aa)). N-linked (GlcNAc...) asparagine glycosylation is present at Asn-741.

It belongs to the ITIH family. As to quaternary structure, I-alpha-I plasma protease inhibitors are assembled from one or two heavy chains (HC) and one light chain, bikunin. Inter-alpha-inhibitor (I-alpha-I) is composed of ITIH1/HC1, ITIH2/HC2 and bikunin. Interacts with TNFAIP6 (via Link and CUB domains). Heavy chains are linked to bikunin via chondroitin 4-sulfate esterified to the alpha-carboxyl of the C-terminal aspartate after propeptide cleavage. In terms of processing, the S-linked glycan is composed of two 6-carbon sugars, possibly Glc or Gal.

The protein resides in the secreted. Functionally, may act as a carrier of hyaluronan in serum or as a binding protein between hyaluronan and other matrix protein, including those on cell surfaces in tissues to regulate the localization, synthesis and degradation of hyaluronan which are essential to cells undergoing biological processes. This Sus scrofa (Pig) protein is Inter-alpha-trypsin inhibitor heavy chain H1 (ITIH1).